Consider the following 351-residue polypeptide: Protein RecA (351 aa).

An ATP-binding site is contributed by 68 to 75; that stretch reads GPESSGKT.

Belongs to the RecA family.

It localises to the cytoplasm. Its function is as follows. Can catalyze the hydrolysis of ATP in the presence of single-stranded DNA, the ATP-dependent uptake of single-stranded DNA by duplex DNA, and the ATP-dependent hybridization of homologous single-stranded DNAs. It interacts with LexA causing its activation and leading to its autocatalytic cleavage. This is Protein RecA from Thermotoga neapolitana (strain ATCC 49049 / DSM 4359 / NBRC 107923 / NS-E).